The primary structure comprises 421 residues: Serine hydroxymethyltransferase (421 aa).

Residues Leu-121 and 125 to 127 (GHL) contribute to the (6S)-5,6,7,8-tetrahydrofolate site. N6-(pyridoxal phosphate)lysine is present on Lys-229.

This sequence belongs to the SHMT family. As to quaternary structure, homodimer. The cofactor is pyridoxal 5'-phosphate.

Its subcellular location is the cytoplasm. It catalyses the reaction (6R)-5,10-methylene-5,6,7,8-tetrahydrofolate + glycine + H2O = (6S)-5,6,7,8-tetrahydrofolate + L-serine. It functions in the pathway one-carbon metabolism; tetrahydrofolate interconversion. Its pathway is amino-acid biosynthesis; glycine biosynthesis; glycine from L-serine: step 1/1. Functionally, catalyzes the reversible interconversion of serine and glycine with tetrahydrofolate (THF) serving as the one-carbon carrier. This reaction serves as the major source of one-carbon groups required for the biosynthesis of purines, thymidylate, methionine, and other important biomolecules. Also exhibits THF-independent aldolase activity toward beta-hydroxyamino acids, producing glycine and aldehydes, via a retro-aldol mechanism. This Actinobacillus pleuropneumoniae serotype 5b (strain L20) protein is Serine hydroxymethyltransferase.